The primary structure comprises 293 residues: HTH-type transcriptional regulator HdfR (293 aa).

The 58-residue stretch at M1–T58 folds into the HTH lysR-type domain. Residues F18 to R37 constitute a DNA-binding region (H-T-H motif).

It belongs to the LysR transcriptional regulatory family.

Its function is as follows. Negatively regulates the transcription of the flagellar master operon flhDC by binding to the upstream region of the operon. This Yersinia pseudotuberculosis serotype O:1b (strain IP 31758) protein is HTH-type transcriptional regulator HdfR.